We begin with the raw amino-acid sequence, 396 residues long: Elongation factor Tu (396 aa).

One can recognise a tr-type G domain in the interval 10–206 (KPHVNVGTIG…ALDTYIPTPE (197 aa)). Residues 19 to 26 (GHVDHGKT) are G1. 19–26 (GHVDHGKT) lines the GTP pocket. T26 contacts Mg(2+). The interval 60–64 (GITIN) is G2. Residues 81-84 (DCPG) form a G3 region. GTP contacts are provided by residues 81–85 (DCPGH) and 136–139 (NKCD). The interval 136-139 (NKCD) is G4. A G5 region spans residues 174–176 (SAK).

It belongs to the TRAFAC class translation factor GTPase superfamily. Classic translation factor GTPase family. EF-Tu/EF-1A subfamily. As to quaternary structure, monomer.

It localises to the cytoplasm. It carries out the reaction GTP + H2O = GDP + phosphate + H(+). Its function is as follows. GTP hydrolase that promotes the GTP-dependent binding of aminoacyl-tRNA to the A-site of ribosomes during protein biosynthesis. This Burkholderia vietnamiensis (strain G4 / LMG 22486) (Burkholderia cepacia (strain R1808)) protein is Elongation factor Tu.